The chain runs to 463 residues: Chitobiosyldiphosphodolichol beta-mannosyltransferase (463 aa).

Residues 1–3 are Lumenal-facing; sequence MKA. The chain crosses the membrane as a helical span at residues 4-24; sequence WHWSVTLVVIYLAIPVILYLL. Residues 25-105 lie on the Cytoplasmic side of the membrane; sequence TRKDDRKPLS…PLILNTRKLP (81 aa). An intramembrane region (helical) is located at residues 106–126; the sequence is FVVFGILKVIRQHWLLISLLY. Residues 127-463 lie on the Lumenal side of the membrane; the sequence is KLRGADYLLV…FSSSSSDDDH (337 aa).

The protein belongs to the glycosyltransferase group 1 family.

The protein resides in the endoplasmic reticulum membrane. It catalyses the reaction an N,N'-diacetylchitobiosyl-diphospho-di-trans,poly-cis-dolichol + GDP-alpha-D-mannose = a beta-D-Man-(1-&gt;4)-beta-D-GlcNAc-(1-&gt;4)-alpha-D-GlcNAc-diphospho-di-trans,poly-cis-dolichol + GDP + H(+). The protein operates within protein modification; protein glycosylation. Functionally, participates in the formation of the lipid-linked precursor oligosaccharide for N-glycosylation. Involved in assembling the dolichol-pyrophosphate-GlcNAc(2)-Man(5) intermediate on the cytoplasmic surface of the ER. This is Chitobiosyldiphosphodolichol beta-mannosyltransferase (ALG1) from Yarrowia lipolytica (strain CLIB 122 / E 150) (Yeast).